Consider the following 210-residue polypeptide: Holliday junction resolvase RecU (210 aa).

The tract at residues 1 to 34 (MAFHYPNGQPYSNHETKQPKKQGRHTSPTTLYGK) is disordered. Residues Thr-90, Asp-92, Glu-105, and Gln-124 each coordinate Mg(2+).

This sequence belongs to the RecU family. It depends on Mg(2+) as a cofactor.

It localises to the cytoplasm. It catalyses the reaction Endonucleolytic cleavage at a junction such as a reciprocal single-stranded crossover between two homologous DNA duplexes (Holliday junction).. Its function is as follows. Endonuclease that resolves Holliday junction intermediates in genetic recombination. Cleaves mobile four-strand junctions by introducing symmetrical nicks in paired strands. Promotes annealing of linear ssDNA with homologous dsDNA. Required for DNA repair, homologous recombination and chromosome segregation. The protein is Holliday junction resolvase RecU of Latilactobacillus sakei subsp. sakei (strain 23K) (Lactobacillus sakei subsp. sakei).